Here is a 259-residue protein sequence, read N- to C-terminus: Type III pantothenate kinase (259 aa).

6-13 (DVGNTNCT) contributes to the ATP binding site. 107 to 110 (GSDR) provides a ligand contact to substrate. The active-site Proton acceptor is aspartate 109. Aspartate 129 is a K(+) binding site. Threonine 132 is a binding site for ATP. Position 184 (threonine 184) interacts with substrate.

Belongs to the type III pantothenate kinase family. Homodimer. NH4(+) is required as a cofactor. It depends on K(+) as a cofactor.

Its subcellular location is the cytoplasm. The enzyme catalyses (R)-pantothenate + ATP = (R)-4'-phosphopantothenate + ADP + H(+). Its pathway is cofactor biosynthesis; coenzyme A biosynthesis; CoA from (R)-pantothenate: step 1/5. In terms of biological role, catalyzes the phosphorylation of pantothenate (Pan), the first step in CoA biosynthesis. This chain is Type III pantothenate kinase, found in Listeria monocytogenes serotype 4b (strain CLIP80459).